The chain runs to 285 residues: MTNHDLASLSQTIETAFENRDAVNTGTRGAVRDAVEAALNLLDSGKVRVAERAADGTWTVNQWLKKAVLLSFRLNPMELVRGGPGEAVWWDKVASKFDGWSVNEFEKAGFRAVPNCVVRRSAYIAPNAVLMPSFVNLGAYVGEGTMVDTWATVGSCAQIGKNVHLSGGVGIGGVLEPMQAGPTIIEDNCFIGARSEVVEGCIVREGSVLGMGVFIGKSTKIVDRATGEVMYGEVPPYSVVVAGSMPSGSAMGNGQPAPNLYCAVIVKRVDEKTRSKTGINELLRD.

Residues Arg111 and Asp148 each coordinate substrate.

Belongs to the transferase hexapeptide repeat family. Homotrimer.

It is found in the cytoplasm. It carries out the reaction (S)-2,3,4,5-tetrahydrodipicolinate + succinyl-CoA + H2O = (S)-2-succinylamino-6-oxoheptanedioate + CoA. The protein operates within amino-acid biosynthesis; L-lysine biosynthesis via DAP pathway; LL-2,6-diaminopimelate from (S)-tetrahydrodipicolinate (succinylase route): step 1/3. This chain is 2,3,4,5-tetrahydropyridine-2,6-dicarboxylate N-succinyltransferase, found in Sinorhizobium medicae (strain WSM419) (Ensifer medicae).